A 204-amino-acid chain; its full sequence is Dephospho-CoA kinase (204 aa).

The DPCK domain occupies 4 to 201 (VIGLTGGIAS…EKYLAMCKKN (198 aa)). 12–17 (ASGKTT) provides a ligand contact to ATP.

The protein belongs to the CoaE family.

The protein localises to the cytoplasm. It carries out the reaction 3'-dephospho-CoA + ATP = ADP + CoA + H(+). Its pathway is cofactor biosynthesis; coenzyme A biosynthesis; CoA from (R)-pantothenate: step 5/5. Catalyzes the phosphorylation of the 3'-hydroxyl group of dephosphocoenzyme A to form coenzyme A. The polypeptide is Dephospho-CoA kinase (Vibrio parahaemolyticus serotype O3:K6 (strain RIMD 2210633)).